A 398-amino-acid chain; its full sequence is MATTDIRLSIAHQTRFAVRLASAISSPSHAKGSSGNAAFSPLSLHVALSLVAAGAAATRDQLAATLGAAEKGDAEGLHALAEQVVQVVLADASGAGGPRSFANVFVDSSLKLKPSFKDLVVGKYKGETQSVDFQTKAPEVAGQVNSWVEKITTGLIKEILPAGSVDSTTRLVLGNALYFKGSWTEKFDASKTKDEKFHLLDGSSVQTPFMSSTKKQYISSYDSLKVLKLPYQQGGDKRQFSMYILLPEAQDGLWNLANKLSTEPEFMEKHMPMQKVPVGQFKLPKFKISFGFEASDMLKGLGLQLPFSSEADLSEMVDSPAARSLYVSSVFHKSFVEVNEEGTEAAARTARVVTLRSLPVEPVKVDFVADHPFLFLIREDLTGVVLFVGHVFNPLVSA.

An RCL region spans residues 342–366 (GTEAAARTARVVTLRSLPVEPVKVD).

This sequence belongs to the serpin family. As to expression, expressed in roots, coleoptiles, shoots, leaves, embryo and endosperm.

In terms of biological role, inhibits chymotrypsin, cathepsin G and trypsin in vitro. The sequence is that of Serpin-ZX (PAZX) from Hordeum vulgare (Barley).